The following is a 303-amino-acid chain: GTPase Era (303 aa).

The Era-type G domain occupies 9 to 176 (KSGFVSIIGR…VEQIVEHMEE (168 aa)). The tract at residues 17 to 24 (GRPNVGKS) is G1. A GTP-binding site is contributed by 17 to 24 (GRPNVGKS). A G2 region spans residues 43-47 (QTTRN). Residues 64–67 (DTPG) are G3. Residues 64-68 (DTPGI) and 126-129 (NKID) contribute to the GTP site. The G4 stretch occupies residues 126–129 (NKID). The G5 stretch occupies residues 155-157 (ISA). Residues 199–284 (IREKVLHLTK…YLELWVKVQK (86 aa)) enclose the KH type-2 domain.

Belongs to the TRAFAC class TrmE-Era-EngA-EngB-Septin-like GTPase superfamily. Era GTPase family. As to quaternary structure, monomer.

Its subcellular location is the cytoplasm. The protein resides in the cell membrane. Functionally, an essential GTPase that binds both GDP and GTP, with rapid nucleotide exchange. Plays a role in 16S rRNA processing and 30S ribosomal subunit biogenesis and possibly also in cell cycle regulation and energy metabolism. In Shouchella clausii (strain KSM-K16) (Alkalihalobacillus clausii), this protein is GTPase Era.